A 202-amino-acid chain; its full sequence is Protein Thf1 (202 aa).

The stretch at 174 to 202 (IYKSSILKMEQAKELLQEAKIKDKKEKKK) forms a coiled coil.

Belongs to the THF1 family.

Functionally, may be involved in photosynthetic membrane biogenesis. This chain is Protein Thf1, found in Prochlorococcus marinus subsp. pastoris (strain CCMP1986 / NIES-2087 / MED4).